A 256-amino-acid chain; its full sequence is Omega-amidase YafV (256 aa).

One can recognise a CN hydrolase domain in the interval L4 to M234. The active-site Proton acceptor is E42. The active site involves K107. The active-site Nucleophile is C141.

Belongs to the carbon-nitrogen hydrolase superfamily. NIT1/NIT2 family.

The enzyme catalyses a monoamide of a dicarboxylate + H2O = a dicarboxylate + NH4(+). Its function is as follows. Hydrolyzes alpha-ketoglutaramate (a-KGM) to alpha-ketoglutarate (alpha-KG) and ammonia (specific activity 6.65 umol/min/mg), has weak activity on L-glutamine, almost no activity on deaminated glutathione (dGSH) and none on glutathione. May function as a metabolite repair enzyme. The sequence is that of Omega-amidase YafV (yafV) from Escherichia coli (strain B / BL21-DE3).